A 284-amino-acid chain; its full sequence is MPASLIDGREISALRRNELKQRVQHHVGLGQRPPGLAVVLIGNDPASVIYVSNKRKACEEVGITSHSYDLPAETTQEKLIQLINELNQSDKIDGILIQLPLPKHINERTIIEHIKPEKDVDGFHPYNLGRLAQRNPFLRPCTPLGIMNLLHHYELNVKRKHAVVIGASNIVGRPMSLELLLAGATVTICHKFTQQLQKFVEIADFLIVATGKMDVIATDWLREHQVVIDVGMHRLPDGSIRGDIDFKKAVEKVAWITPVPGGVGPMTIVTLLENTMMSAARLRE.

Position 166–168 (166–168 (GAS)) interacts with NADP(+).

The protein belongs to the tetrahydrofolate dehydrogenase/cyclohydrolase family. Homodimer.

The catalysed reaction is (6R)-5,10-methylene-5,6,7,8-tetrahydrofolate + NADP(+) = (6R)-5,10-methenyltetrahydrofolate + NADPH. The enzyme catalyses (6R)-5,10-methenyltetrahydrofolate + H2O = (6R)-10-formyltetrahydrofolate + H(+). The protein operates within one-carbon metabolism; tetrahydrofolate interconversion. Its function is as follows. Catalyzes the oxidation of 5,10-methylenetetrahydrofolate to 5,10-methenyltetrahydrofolate and then the hydrolysis of 5,10-methenyltetrahydrofolate to 10-formyltetrahydrofolate. This chain is Bifunctional protein FolD, found in Legionella pneumophila (strain Paris).